We begin with the raw amino-acid sequence, 279 residues long: 3-methyl-2-oxobutanoate hydroxymethyltransferase (279 aa).

Mg(2+) is bound by residues Asp43 and Asp82. Residues 43–44 (DS), Asp82, and Lys112 contribute to the 3-methyl-2-oxobutanoate site. Mg(2+) is bound at residue Glu114. The active-site Proton acceptor is Glu181.

This sequence belongs to the PanB family. In terms of assembly, homodecamer; pentamer of dimers. Mg(2+) is required as a cofactor.

The protein localises to the cytoplasm. The enzyme catalyses 3-methyl-2-oxobutanoate + (6R)-5,10-methylene-5,6,7,8-tetrahydrofolate + H2O = 2-dehydropantoate + (6S)-5,6,7,8-tetrahydrofolate. The protein operates within cofactor biosynthesis; (R)-pantothenate biosynthesis; (R)-pantoate from 3-methyl-2-oxobutanoate: step 1/2. Functionally, catalyzes the reversible reaction in which hydroxymethyl group from 5,10-methylenetetrahydrofolate is transferred onto alpha-ketoisovalerate to form ketopantoate. The sequence is that of 3-methyl-2-oxobutanoate hydroxymethyltransferase from Geobacillus kaustophilus (strain HTA426).